A 720-amino-acid polypeptide reads, in one-letter code: Glycine--tRNA ligase beta subunit (720 aa).

This sequence belongs to the class-II aminoacyl-tRNA synthetase family. As to quaternary structure, tetramer of two alpha and two beta subunits.

It is found in the cytoplasm. It catalyses the reaction tRNA(Gly) + glycine + ATP = glycyl-tRNA(Gly) + AMP + diphosphate. This Acidovorax sp. (strain JS42) protein is Glycine--tRNA ligase beta subunit.